The primary structure comprises 343 residues: Allergin-1 (343 aa).

The first 19 residues, 1-19 (MWSHLNRLLFWSIFSSVTC), serve as a signal peptide directing secretion. Residues 20 to 227 (RKAVLDCEAM…GGDSCPFCLK (208 aa)) lie on the Extracellular side of the membrane. 2 consecutive Ig-like C2-type domains span residues 35-118 (PSPC…RDFS) and 128-213 (PVLN…HPVT). Asn51, Asn60, Asn89, Asn151, Asn157, and Asn182 each carry an N-linked (GlcNAc...) asparagine glycan. 2 cysteine pairs are disulfide-bonded: Cys56/Cys103 and Cys147/Cys196. A helical membrane pass occupies residues 228–248 (LLLPGLLLLLVVIILILAFWV). Residues 249–343 (LPKYKTRKAM…SGYVYSELNF (95 aa)) lie on the Cytoplasmic side of the membrane. 2 short sequence motifs (ITIM motif) span residues 311 to 316 (LQYATP) and 336 to 341 (YVYSEL). Phosphotyrosine occurs at positions 313 and 338.

In terms of assembly, monomer. Interacts (tyrosine-phosphorylated) with PTPN6, PTPN11 and INPP5D. Post-translationally, N-glycosylated. As to expression, expressed in myeloid cells (dendritic cells, macrophages and neutrophils, weak expression on B-cells but not in T-cells or natural killer cells), peripheral blood basophils and mast cells (at protein level).

The protein localises to the cell membrane. Immunoglobulin-like receptor which plays an inhibitory role in degranulation of mast cells. Negatively regulates IgE-mediated mast cell activation and suppresses the type I immediate hypersensitivity reaction. In Homo sapiens (Human), this protein is Allergin-1 (MILR1).